Consider the following 743-residue polypeptide: Phosphoribosylformylglycinamidine synthase subunit PurL (743 aa).

Residue H54 is part of the active site. The ATP site is built by Y57 and K96. E98 contributes to the Mg(2+) binding site. Substrate contacts are provided by residues 99–102 (SHNH) and R121. The active-site Proton acceptor is H100. Mg(2+) is bound at residue D122. Q245 provides a ligand contact to substrate. D273 contributes to the Mg(2+) binding site. 317-319 (ESQ) provides a ligand contact to substrate. ATP-binding residues include D501 and G538. N539 lines the Mg(2+) pocket. Position 541 (S541) interacts with substrate.

It belongs to the FGAMS family. In terms of assembly, monomer. Part of the FGAM synthase complex composed of 1 PurL, 1 PurQ and 2 PurS subunits.

The protein resides in the cytoplasm. The enzyme catalyses N(2)-formyl-N(1)-(5-phospho-beta-D-ribosyl)glycinamide + L-glutamine + ATP + H2O = 2-formamido-N(1)-(5-O-phospho-beta-D-ribosyl)acetamidine + L-glutamate + ADP + phosphate + H(+). It participates in purine metabolism; IMP biosynthesis via de novo pathway; 5-amino-1-(5-phospho-D-ribosyl)imidazole from N(2)-formyl-N(1)-(5-phospho-D-ribosyl)glycinamide: step 1/2. In terms of biological role, part of the phosphoribosylformylglycinamidine synthase complex involved in the purines biosynthetic pathway. Catalyzes the ATP-dependent conversion of formylglycinamide ribonucleotide (FGAR) and glutamine to yield formylglycinamidine ribonucleotide (FGAM) and glutamate. The FGAM synthase complex is composed of three subunits. PurQ produces an ammonia molecule by converting glutamine to glutamate. PurL transfers the ammonia molecule to FGAR to form FGAM in an ATP-dependent manner. PurS interacts with PurQ and PurL and is thought to assist in the transfer of the ammonia molecule from PurQ to PurL. The sequence is that of Phosphoribosylformylglycinamidine synthase subunit PurL from Halalkalibacterium halodurans (strain ATCC BAA-125 / DSM 18197 / FERM 7344 / JCM 9153 / C-125) (Bacillus halodurans).